The following is a 341-amino-acid chain: Fructose-1,6-bisphosphatase, cytosolic (341 aa).

Mg(2+) is bound by residues Glu-100, Asp-121, Leu-123, and Asp-124. Residues 124-127, Asn-215, Tyr-247, Tyr-267, and Lys-277 contribute to the substrate site; that span reads DGSS. Glu-283 serves as a coordination point for Mg(2+).

The protein belongs to the FBPase class 1 family. Mg(2+) serves as cofactor.

It is found in the cytoplasm. It carries out the reaction beta-D-fructose 1,6-bisphosphate + H2O = beta-D-fructose 6-phosphate + phosphate. The polypeptide is Fructose-1,6-bisphosphatase, cytosolic (FBPban1) (Musa acuminata (Banana)).